The chain runs to 94 residues: Cell division topological specificity factor (94 aa).

The protein belongs to the MinE family.

In terms of biological role, prevents the cell division inhibition by proteins MinC and MinD at internal division sites while permitting inhibition at polar sites. This ensures cell division at the proper site by restricting the formation of a division septum at the midpoint of the long axis of the cell. The polypeptide is Cell division topological specificity factor (Alkaliphilus metalliredigens (strain QYMF)).